The sequence spans 193 residues: Ribosomal RNA large subunit methyltransferase E (193 aa).

Positions 48, 50, 67, 85, and 107 each coordinate S-adenosyl-L-methionine. Catalysis depends on Lys147, which acts as the Proton acceptor.

This sequence belongs to the class I-like SAM-binding methyltransferase superfamily. RNA methyltransferase RlmE family.

It localises to the cytoplasm. The enzyme catalyses uridine(2552) in 23S rRNA + S-adenosyl-L-methionine = 2'-O-methyluridine(2552) in 23S rRNA + S-adenosyl-L-homocysteine + H(+). Its function is as follows. Specifically methylates the uridine in position 2552 of 23S rRNA at the 2'-O position of the ribose in the fully assembled 50S ribosomal subunit. The sequence is that of Ribosomal RNA large subunit methyltransferase E from Borrelia duttonii (strain Ly).